A 105-amino-acid polypeptide reads, in one-letter code: Integration host factor subunit alpha (105 aa).

This sequence belongs to the bacterial histone-like protein family. Heterodimer of an alpha and a beta chain.

This protein is one of the two subunits of integration host factor, a specific DNA-binding protein that functions in genetic recombination as well as in transcriptional and translational control. This chain is Integration host factor subunit alpha, found in Azorhizobium caulinodans (strain ATCC 43989 / DSM 5975 / JCM 20966 / LMG 6465 / NBRC 14845 / NCIMB 13405 / ORS 571).